We begin with the raw amino-acid sequence, 1033 residues long: MEFLEQEGQEVLTKEIKAGFCEITPSSITEQTTKPQLDETQLVDEYVHTKELETTPIPISFATKEVLFEEVFNTPSTQQVDESVLVNEYIELTQQIKNASEQVSSNHTHKFSVATEPAATKAVSETMLLDDYVEMVEQDVQAQTALPQAALDPTVSLTFSSPIDSNAILVYPEMKVPHVFDTVAPTTTTVPLDQTQLLDELVEVPVLTHTVTPAPLQPKAAPTNFALDQTQLVDELVTVPLTHTLVNESAPVTPVVVTSPAAEHSFSITTVDKANLTNALSQTVVIKPAEDSAHQSAVLDKEIATKQAQLQQLQAQIELRQAQLETPPVTYMGVEEYKLLPVQDVVPVQPTVSFEMTLLQEQLDKALKHNAALQIQLEEQLAKPLQYDQSPVLQERIELLQNQNTNLTQELNELQQKLFKSQNNSLLLARLEEENRTLKQHLQNNLPEANQLNFVLEKQLEQLQQDKHSLTLQIEQYKFDSKKHQEQLALIPSLRSEINSLETEVISLKQTNQRLSLIERENNFLKTEIKQLRETKLNDENTKYRNLLKQYELMRADSDAKLKELEHEQHLAHQHHQEQLAQLQRHNEALVKELDQVKATNFELGLAAQGFEQQKVVLEQKNSSLLASLQAAEENVQALGITNSELQNQLNVLEFTHKEKTAFDSKTLTLTKQQLEQTQFDLSLTQEQLATFKQQNQSLTDKLMASETQLNHLQQSDENLTQLQTQHELLQESYNKLQDEANHTQQQFHQAQNELDAAHQQLALFKQNNEELTDKCSNIQNELHDLNRVKTNWENLNTEHNLLQDKYAQQKEQMQHEHSNLAQIQAEHELLQESYNKVKAELNEIQITNLNEANAQYQDLLSAYELLQSNHNKLKQELQVLNQVNLEKQQLAQKLHNTHQSLSQTHAELTQLQAAYNNLQATPPVSDELLEQFNQVQLEKQRLLQQNLALVHELQYFNELNSSQTHEIKTKQDETVKEVIIVEKEIPVPPEKKPRLKKRDIVIENKEDALGKLSKKERIQAYAERLAKINGKQ.

This is an uncharacterized protein from Mycoplasma pneumoniae (strain ATCC 29342 / M129 / Subtype 1) (Mycoplasmoides pneumoniae).